The following is a 641-amino-acid chain: Threonine--tRNA ligase (641 aa).

The TGS domain occupies 1-61; that stretch reads MPAITLPDGS…ADDASVRFIT (61 aa). Residues 243–536 form a catalytic region; it reads DHRRIGREMD…LIEQHAGRFP (294 aa). The Zn(2+) site is built by Cys-336, His-387, and His-513.

Belongs to the class-II aminoacyl-tRNA synthetase family. As to quaternary structure, homodimer. It depends on Zn(2+) as a cofactor.

Its subcellular location is the cytoplasm. It carries out the reaction tRNA(Thr) + L-threonine + ATP = L-threonyl-tRNA(Thr) + AMP + diphosphate + H(+). Functionally, catalyzes the attachment of threonine to tRNA(Thr) in a two-step reaction: L-threonine is first activated by ATP to form Thr-AMP and then transferred to the acceptor end of tRNA(Thr). Also edits incorrectly charged L-seryl-tRNA(Thr). The polypeptide is Threonine--tRNA ligase (Gluconacetobacter diazotrophicus (strain ATCC 49037 / DSM 5601 / CCUG 37298 / CIP 103539 / LMG 7603 / PAl5)).